A 168-amino-acid polypeptide reads, in one-letter code: Putative ankyrin repeat protein RBE_1411 (168 aa).

ANK repeat units follow at residues 59 to 88 (TIFS…LQHK), 98 to 127 (YGDT…DLTI), and 131 to 160 (KGET…ILGN).

The polypeptide is Putative ankyrin repeat protein RBE_1411 (Rickettsia bellii (strain RML369-C)).